A 152-amino-acid chain; its full sequence is Syntaxin-8A (152 aa).

The span at 1–14 (MNNNNNFNSNFNSN) shows a compositional bias: low complexity. The interval 1 to 22 (MNNNNNFNSNFNSNRISSTQPY) is disordered. At 1 to 131 (MNNNNNFNSN…LTQQSKTTGY (131 aa)) the chain is on the cytoplasmic side. Positions 60–122 (KRDMEEQDKM…RNTTKNLITL (63 aa)) constitute a t-SNARE coiled-coil homology domain. Residues 132-152 (CSAICFLLLVLLVIIILASVL) form a helical; Anchor for type IV membrane protein membrane-spanning segment.

This sequence belongs to the syntaxin family. As to quaternary structure, component of the SNARE complex composed of syn7A, syn8A, vamp7A and vti1A.

The protein localises to the endosome membrane. Involved in the targeting and/or fusion of transport vesicles to their target membrane during transport of proteins from the early endosome to the lysosome. Required for fusion of late endosomes with lysosomes and homotypic lysosomal fusion. The protein is Syntaxin-8A of Dictyostelium discoideum (Social amoeba).